A 433-amino-acid polypeptide reads, in one-letter code: Schlafen-like protein 2 (433 aa).

The 168-residue stretch at 1–168 (MADTSPRESK…LSVNFGSQPF (168 aa)) folds into the B30.2/SPRY domain. The segment at 199–400 (EHVVVKLPFA…RRMASNKCVY (202 aa)) is SLFN-like fold. Residues Glu211 and Glu216 contribute to the active site.

Belongs to the Schlafen family. Component of the trimeric PUCH (precursor of 21U RNA 5'-end cleavage holoenzyme) complex; consisting of tofu-1, tofu-2 and either slfl-3 or slfl-4. Within the complex, interacts (via N-terminus) with tofu-1 (via N-terminus); the interaction stabilizes tofu-2 and may form a functional nuclease. Within the complex, interacts (via N-terminus) with slfl-3 (via N-terminus); the presence of tofu-1 is required for this interaction. Mg(2+) serves as cofactor. Expressed in the germline.

The protein resides in the cytoplasm. It localises to the mitochondrion. With respect to regulation, inhibited by ethylenediaminetetraacetic acid (EDTA). Its function is as follows. Component of the trimeric PUCH (precursor of 21U RNA 5'-end cleavage holoenzyme) complex, that acts as an endoribonuclease processing the 5'-end of precursor Piwi-interacting RNAs (piRNAs). The PUCH complex consists of tofu-1, tofu-2 and either slfl-3 or slfl-4, with tofu-2 exhibiting endoribonuclease activity. PUCH-mediated processing strictly requires a 7-methyl-G cap (m7 G-cap) and an uracil at position three (U3). PUCH also exhibits a strict bias for piRNA precursors with an A or G at position 1. Mature piRNA production is enhanced by the interaction of PUCH with the PETISCO complex, which is stabilizing piRNA precursors and allows their processing by PUCH. The polypeptide is Schlafen-like protein 2 (Caenorhabditis elegans).